Consider the following 286-residue polypeptide: Shikimate dehydrogenase (NADP(+)) (286 aa).

Residues 20-22 and serine 67 each bind shikimate; that span reads SLS. Lysine 71 acts as the Proton acceptor in catalysis. 2 residues coordinate shikimate: asparagine 92 and aspartate 107. NADP(+)-binding positions include 131–135 and alanine 230; that span reads GGGGA. Tyrosine 232 lines the shikimate pocket. Residue glycine 253 participates in NADP(+) binding.

This sequence belongs to the shikimate dehydrogenase family. Homodimer.

The catalysed reaction is shikimate + NADP(+) = 3-dehydroshikimate + NADPH + H(+). Its pathway is metabolic intermediate biosynthesis; chorismate biosynthesis; chorismate from D-erythrose 4-phosphate and phosphoenolpyruvate: step 4/7. Functionally, involved in the biosynthesis of the chorismate, which leads to the biosynthesis of aromatic amino acids. Catalyzes the reversible NADPH linked reduction of 3-dehydroshikimate (DHSA) to yield shikimate (SA). This Lactococcus lactis subsp. cremoris (strain MG1363) protein is Shikimate dehydrogenase (NADP(+)).